A 146-amino-acid chain; its full sequence is Large ribosomal subunit protein uL15 (146 aa).

Residues 1–51 form a disordered region; that stretch reads MKLHELQPAPGSRKERNRVGRGIGSGNGKTSGKGHKGQNARSGGGVRIGFE. Composition is skewed to gly residues over residues 21-31 and 42-51; these read RGIGSGNGKTS and SGGGVRIGFE.

The protein belongs to the universal ribosomal protein uL15 family. As to quaternary structure, part of the 50S ribosomal subunit.

In terms of biological role, binds to the 23S rRNA. This is Large ribosomal subunit protein uL15 from Anoxybacillus flavithermus (strain DSM 21510 / WK1).